The following is a 321-amino-acid chain: Transaldolase (321 aa).

Lys-132 functions as the Schiff-base intermediate with substrate in the catalytic mechanism.

Belongs to the transaldolase family. Type 1 subfamily. Homodimer.

The protein resides in the cytoplasm. The catalysed reaction is D-sedoheptulose 7-phosphate + D-glyceraldehyde 3-phosphate = D-erythrose 4-phosphate + beta-D-fructose 6-phosphate. Its pathway is carbohydrate degradation; pentose phosphate pathway; D-glyceraldehyde 3-phosphate and beta-D-fructose 6-phosphate from D-ribose 5-phosphate and D-xylulose 5-phosphate (non-oxidative stage): step 2/3. Transaldolase is important for the balance of metabolites in the pentose-phosphate pathway. This is Transaldolase from Rhizobium leguminosarum bv. trifolii (strain WSM2304).